The chain runs to 717 residues: Amino-acid acetyltransferase, mitochondrial (717 aa).

The transit peptide at 1–23 directs the protein to the mitochondrion; sequence MFIWTKAPARGLGKASKILPKRD. The tract at residues 35-70 is disordered; that stretch reads KQFHTATTSVRRSSSSAKERQRAERQQLTRLLKESP. The segment covering 39-50 has biased composition (low complexity); that stretch reads TATTSVRRSSSS. The segment covering 51-70 has biased composition (basic and acidic residues); sequence AKERQRAERQQLTRLLKESP. The N-acetyltransferase domain occupies 518–691; that stretch reads NPSIELADDP…GDVDDAKKRD (174 aa).

This sequence belongs to the acetyltransferase family.

Its subcellular location is the mitochondrion. The catalysed reaction is L-glutamate + acetyl-CoA = N-acetyl-L-glutamate + CoA + H(+). The protein operates within amino-acid biosynthesis; L-arginine biosynthesis; N(2)-acetyl-L-ornithine from L-glutamate: step 1/4. Its function is as follows. N-acetylglutamate synthase involved in arginine biosynthesis. The sequence is that of Amino-acid acetyltransferase, mitochondrial (arg2) from Pyrenophora tritici-repentis (strain Pt-1C-BFP) (Wheat tan spot fungus).